We begin with the raw amino-acid sequence, 190 residues long: Orotate phosphoribosyltransferase (190 aa).

Residue 114 to 122 coordinates 5-phospho-alpha-D-ribose 1-diphosphate; the sequence is EDVITTGGS. Residues T118 and R146 each coordinate orotate.

Belongs to the purine/pyrimidine phosphoribosyltransferase family. PyrE subfamily. As to quaternary structure, homodimer. Requires Mg(2+) as cofactor.

The catalysed reaction is orotidine 5'-phosphate + diphosphate = orotate + 5-phospho-alpha-D-ribose 1-diphosphate. It functions in the pathway pyrimidine metabolism; UMP biosynthesis via de novo pathway; UMP from orotate: step 1/2. Its function is as follows. Catalyzes the transfer of a ribosyl phosphate group from 5-phosphoribose 1-diphosphate to orotate, leading to the formation of orotidine monophosphate (OMP). In Caldicellulosiruptor bescii (strain ATCC BAA-1888 / DSM 6725 / KCTC 15123 / Z-1320) (Anaerocellum thermophilum), this protein is Orotate phosphoribosyltransferase.